Reading from the N-terminus, the 62-residue chain is DKPTTKPICEQAFGNSGPCFAYIKLYSYNQKTKKCEEFIYGGCKGNDNRFDTLAECEQKCIK.

The 52-residue stretch at 9 to 60 folds into the BPTI/Kunitz inhibitor domain; that stretch reads CEQAFGNSGPCFAYIKLYSYNQKTKKCEEFIYGGCKGNDNRFDTLAECEQKC. 3 cysteine pairs are disulfide-bonded: C9/C60, C19/C43, and C35/C56.

Its function is as follows. Inhibits chymotrypsin and thus avoids the accidental chymotrypsin-mediated activation of prophenoloxidase. This enzyme is required by the insect immune system to produce melanin which is used to engulf foreign objects. In terms of biological role, also inhibits trypsin weakly, this may be due to the presence of a pseudo-reactive bond in positions 44-45 (Lys-Gly). The sequence is that of Chymotrypsin inhibitor SCI-II from Bombyx mori (Silk moth).